The primary structure comprises 88 residues: Co-chaperonin GroES (88 aa).

It belongs to the GroES chaperonin family. Heptamer of 7 subunits arranged in a ring. Interacts with the chaperonin GroEL.

It is found in the cytoplasm. In terms of biological role, together with the chaperonin GroEL, plays an essential role in assisting protein folding. The GroEL-GroES system forms a nano-cage that allows encapsulation of the non-native substrate proteins and provides a physical environment optimized to promote and accelerate protein folding. GroES binds to the apical surface of the GroEL ring, thereby capping the opening of the GroEL channel. The chain is Co-chaperonin GroES from Rubrobacter xylanophilus (strain DSM 9941 / JCM 11954 / NBRC 16129 / PRD-1).